We begin with the raw amino-acid sequence, 180 residues long: Acireductone dioxygenase (180 aa).

Residues His-97, His-99, Glu-103, and His-141 each contribute to the Fe(2+) site. 4 residues coordinate Ni(2+): His-97, His-99, Glu-103, and His-141.

This sequence belongs to the acireductone dioxygenase (ARD) family. In terms of assembly, monomer. Requires Fe(2+) as cofactor. Ni(2+) serves as cofactor.

The catalysed reaction is 1,2-dihydroxy-5-(methylsulfanyl)pent-1-en-3-one + O2 = 3-(methylsulfanyl)propanoate + CO + formate + 2 H(+). The enzyme catalyses 1,2-dihydroxy-5-(methylsulfanyl)pent-1-en-3-one + O2 = 4-methylsulfanyl-2-oxobutanoate + formate + 2 H(+). Its pathway is amino-acid biosynthesis; L-methionine biosynthesis via salvage pathway; L-methionine from S-methyl-5-thio-alpha-D-ribose 1-phosphate: step 5/6. In terms of biological role, catalyzes 2 different reactions between oxygen and the acireductone 1,2-dihydroxy-3-keto-5-methylthiopentene (DHK-MTPene) depending upon the metal bound in the active site. Fe-containing acireductone dioxygenase (Fe-ARD) produces formate and 2-keto-4-methylthiobutyrate (KMTB), the alpha-ketoacid precursor of methionine in the methionine recycle pathway. Ni-containing acireductone dioxygenase (Ni-ARD) produces methylthiopropionate, carbon monoxide and formate, and does not lie on the methionine recycle pathway. The protein is Acireductone dioxygenase of Klebsiella pneumoniae subsp. pneumoniae (strain ATCC 700721 / MGH 78578).